The primary structure comprises 427 residues: MSHWFHRNPIKPTEFVKFDLKGVLTTDTCSKICGELRLRRDKLVSQFKNASNDLEEVTKEFNEYLRLFAGFLIEIQSSMVELENKDAGNKNSKLIPLIRFKWGNSMLPQAATEVSDTWFEALSMIQCMAMWLTKHAASMAGKDEVRESDAKECLQCLRQAGGMFQYVKDESSRLSGANEVEGSDFDPKVMETYILTATAEAQEVIVARAIEMKHDDGLISSLAAVTASIFSKADQCLNNLPDESFARWRRYLQLKHHFYLAYAFAFLGQKQLSEDKCGEAVRACKQGIAEYGVAKEMAAMYATATGPGTRIKPEQHLFFRRIEPLLNRHLEKAERENGFIYHQKVPDEIPQLDVEATYGLAKLDSFTYPPPAESWNTAVYSAFDLSKANMPDFSKIKKSKSKLDPVHEEKIYQTEKDPSNSSGCVIA.

In terms of domain architecture, BRO1 spans 1–427; sequence MSHWFHRNPI…PSNSSGCVIA (427 aa).

Belongs to the BROX family.

The protein is BRO1 domain-containing protein BROX homolog of Caenorhabditis elegans.